Consider the following 161-residue polypeptide: MSVVSQVILQADDQLRYPTSGELKGIQAFLTTGAQRIRIAETLAENEKKIVDQAQKQLFKKHPEYRAPGGNAYGQRQYNQCLRDYGWYLRLVTYGVLAGNKEPIETTGLIGVKEMYNSLNVPVPGMVDAVTVLKDAALGLLSAEDANETAPYFDYIIQFMS.

N4-methylasparagine is present on N71. Residue C81 participates in (2R,3E)-phycocyanobilin binding.

The protein belongs to the phycobiliprotein family. In terms of assembly, heterohexamer of two alpha chains, one alpha-B chain and three beta chains. In terms of processing, contains one covalently linked bilin chromophore.

The protein resides in the cellular thylakoid membrane. Functionally, light-harvesting photosynthetic bile pigment-protein from the phycobiliprotein complex. Allophycocyanin has a maximum absorption at approximately 654 nanometers. The polypeptide is Allophycocyanin subunit alpha-B (apcD) (Synechocystis sp. (strain ATCC 27184 / PCC 6803 / Kazusa)).